The primary structure comprises 122 residues: Basic phospholipase A2 homolog myotoxin II (122 aa).

7 cysteine pairs are disulfide-bonded: Cys26–Cys116, Cys28–Cys44, Cys43–Cys95, Cys49–Cys122, Cys50–Cys88, Cys57–Cys81, and Cys75–Cys86. An important for membrane-damaging activities in eukaryotes and bacteria; heparin-binding region spans residues 105 to 118; it reads KKYRYNYLKPFCKK.

It belongs to the phospholipase A2 family. Group II subfamily. K49 sub-subfamily. As to quaternary structure, homodimer; non-covalently linked (probable alternative/compact dimer conformation). Expressed by the venom gland.

Its subcellular location is the secreted. Its activity is regulated as follows. Myotoxic activity is inhibited by suramin and rosmarinic acid. Cytotoxic and myotoxic activities are inhibited by pre-incubation with varespladib. Suramin inhibits this myotoxin by (i) direct blockage of the MDoS and MDiS, preventing the toxin/membrane interaction and disruption and (ii) formation of an oligomeric complex, resulting in a tetrameric configuration for which both MDoS and MDiS becomes physically inaccessible, thus avoiding any possibility of toxin-membrane interaction or disruption. Heparin completely inhibits the cytotoxic and bactericidal activities, but only partially the myotoxic, edema-inducing and lethal effects. In terms of biological role, snake venom phospholipase A2 (PLA2) homolog that lacks enzymatic activity. Shows high myotoxin activities. Also shows neurotoxicity, since it induces muscle paralysis when tested on mouse phrenic-diaphragm preparations. Displays edema-inducing activities. Also displays antimicrobial activity against E.coli and C.albicans, as well as antitumoral activity against some human and mice cell lines. In addition, it is effective as parasiticidal agent against Leishmania sp. and S.mansoni. It also disrupts negatively charged liposomes in a dose- and temperature-dependent manner and shows toxicity by intraperitoneal route. In contrast to other phospholipase A2-like toxins, this myotoxin does not require fatty acid binding to be active. This is Basic phospholipase A2 homolog myotoxin II from Bothrops moojeni (Lance-headed viper).